Consider the following 390-residue polypeptide: Neuromedin-B receptor (390 aa).

Residues 1–20 (MPPRSLPNLSLPTEASESEL) are disordered. Residues 1–41 (MPPRSLPNLSLPTEASESELEPEVWENDFLPDSDGTTAELV) lie on the Extracellular side of the membrane. N-linked (GlcNAc...) asparagine glycosylation occurs at Asn8. A helical membrane pass occupies residues 42 to 65 (IRCVIPSLYLIIISVGLLGNIMLV). Topologically, residues 66–79 (KIFLTNSTMRSVPN) are cytoplasmic. The helical transmembrane segment at 80-99 (IFISNLAAGDLLLLLTCVPV) threads the bilayer. The Extracellular segment spans residues 100 to 117 (DASRYFFDEWVFGKLGCK). Cys116 and Cys198 form a disulfide bridge. A helical transmembrane segment spans residues 118–139 (LIPAIQLTSVGVSVFTLTALSA). At 140–156 (DRYRAIVNPMDMQTSGV) the chain is on the cytoplasmic side. Residues 157–177 (VLWTSLKAVGIWVVSVLLAVP) form a helical membrane-spanning segment. Residues 178-211 (EAVFSEVARIGSSDNSSFTACIPYPQTDELHPKI) are Extracellular-facing. Asn192 carries an N-linked (GlcNAc...) asparagine glycan. A helical membrane pass occupies residues 212 to 235 (HSVLIFLVYFLIPLVIISIYYYHI). The Cytoplasmic portion of the chain corresponds to 236–266 (AKTLIRSAHNLPGEYNEHTKKQMETRKRLAK). Residues 267–287 (IVLVFVGCFVFCWFPNHILYL) traverse the membrane as a helical segment. The Extracellular segment spans residues 288–299 (YRSFNYKEIDPS). A helical transmembrane segment spans residues 300 to 327 (LGHMIVTLVARVLSFSNSCVNPFALYLL). Over 328 to 390 (SESFRKHFNS…GHSTKQEIAL (63 aa)) the chain is Cytoplasmic. Residue Cys341 is the site of S-palmitoyl cysteine attachment. Position 352 is a phosphoserine (Ser352).

The protein belongs to the G-protein coupled receptor 1 family. As to expression, brain (olfactory bulb and central thalamic regions), and esophagus.

The protein localises to the cell membrane. Receptor for neuromedin-B. Contributes to the maintenance of basal sigh rate through signaling in the pre-Botzinger complex, a cluster of several thousand neurons in the ventrolateral medulla responsible for inspiration during respiratory activity. Contributes to the induction of sneezing following exposure to chemical irritants or allergens which causes release of NMB by nasal sensory neurons and activation of NMBR-expressing neurons in the sneeze-evoking region of the brainstem. These in turn activate neurons of the caudal ventral respiratory group, giving rise to the sneezing response. Contributes to induction of acute itch, possibly through its activation on dorsal root ganglion neurons by the NMB peptide. Plays a role in the innate immune response to influenza A virus infection by enhancing interferon alpha expression and reducing expression of IL6. Plays a role in CSF1-induced proliferation of osteoclast precursors by contributing to the positive regulation of the expression of the CSF1 receptor CSF1R. This Rattus norvegicus (Rat) protein is Neuromedin-B receptor (Nmbr).